Consider the following 1479-residue polypeptide: Putative receptor-type tyrosine-protein phosphatase mosPTP-1 (1479 aa).

The first 28 residues, 1–28 (MKPRLLTTVTTWLALVLPVVYLSRPCQA), serve as a signal peptide directing secretion. Residues 29-365 (LPTVNFTANY…RQSYNDYNLA (337 aa)) lie on the Extracellular side of the membrane. Residues Asn-33, Asn-40, Asn-146, Asn-182, Asn-248, Asn-294, and Asn-306 are each glycosylated (N-linked (GlcNAc...) asparagine). Fibronectin type-III domains lie at 143 to 242 (KPLN…AGPS) and 243 to 346 (APKV…VQLN). A helical membrane pass occupies residues 366 to 386 (VMIGILICCFGLLFIVLTILL). Over 387 to 1479 (WKKCFHAAYY…AKLRAVVRVE (1093 aa)) the chain is Cytoplasmic. Tyrosine-protein phosphatase domains lie at 452–717 (FSKE…LVEA) and 740–992 (IDSQ…LSYM). The active-site Phosphocysteine intermediate is Cys-658.

Belongs to the protein-tyrosine phosphatase family. Receptor class subfamily. Interacts with C-type lectin mosGCTL-1. Interacts with C-type lectin mosGCTL-7.

The protein resides in the cell membrane. It catalyses the reaction O-phospho-L-tyrosyl-[protein] + H2O = L-tyrosyl-[protein] + phosphate. In terms of biological role, putative protein tyrosine-protein phosphatase. Functionally, (Microbial infection) Facilitates West Nile virus infection in mosquitoes. The polypeptide is Putative receptor-type tyrosine-protein phosphatase mosPTP-1 (Culex quinquefasciatus (Southern house mosquito)).